Reading from the N-terminus, the 664-residue chain is ATP synthase subunit alpha 2 (664 aa).

An ATP-binding site is contributed by 180–187 (GDRATGKT). Residues 525-664 (MPAEDAAGDI…DAEAEARHKR (140 aa)) are disordered. The span at 543 to 588 (ARGDADRDADHGANREVSREVSPEASREVSREVSCEVSHEADRDAA) shows a compositional bias: basic and acidic residues. Positions 589-599 (ADAARVAGRAP) are enriched in low complexity. Basic and acidic residues predominate over residues 621–639 (ADGDRASASRPRPDARGDA).

Belongs to the ATPase alpha/beta chains family. F-type ATPases have 2 components, CF(1) - the catalytic core - and CF(0) - the membrane proton channel. CF(1) has five subunits: alpha(3), beta(3), gamma(1), delta(1), epsilon(1). CF(0) has three main subunits: a(1), b(2) and c(9-12). The alpha and beta chains form an alternating ring which encloses part of the gamma chain. CF(1) is attached to CF(0) by a central stalk formed by the gamma and epsilon chains, while a peripheral stalk is formed by the delta and b chains.

It localises to the cell inner membrane. The enzyme catalyses ATP + H2O + 4 H(+)(in) = ADP + phosphate + 5 H(+)(out). Produces ATP from ADP in the presence of a proton gradient across the membrane. The alpha chain is a regulatory subunit. The sequence is that of ATP synthase subunit alpha 2 from Burkholderia pseudomallei (strain 1710b).